A 77-amino-acid polypeptide reads, in one-letter code: Dermatoxin-DA1 (77 aa).

An N-terminal signal peptide occupies residues 1 to 22; it reads MAFLKKSLFLVLFLGLVPLFLC. A propeptide spanning residues 23–42 is cleaved from the precursor; it reads ENEKREGENEKEENDDQSEE. Lys76 carries the post-translational modification Lysine amide.

The protein belongs to the frog skin active peptide (FSAP) family. Dermatoxin subfamily. As to expression, expressed by the skin glands.

The protein localises to the secreted. Possesses a potent antimicrobial activity against Gram-positive and Gram-negative bacteria. Probably acts by disturbing membrane functions with its amphipathic structure. The polypeptide is Dermatoxin-DA1 (Agalychnis dacnicolor (Giant Mexican leaf frog)).